The sequence spans 729 residues: Alpha-galactosidase AgaA (729 aa).

Substrate is bound by residues Asp-53, Trp-199, 366–367, Arg-443, 476–480, Cys-526, and Asp-548; these read DD and KWDMN. Asp-478 functions as the Nucleophile in the catalytic mechanism. Residue Asp-548 is the Proton donor of the active site.

This sequence belongs to the glycosyl hydrolase 36 family. Homotetramer.

It carries out the reaction Hydrolysis of terminal, non-reducing alpha-D-galactose residues in alpha-D-galactosides, including galactose oligosaccharides, galactomannans and galactolipids.. Its activity is regulated as follows. Not inhibited by D-galactose or sucrose. Inhibited by pharmaceutical drug 1-deoxygalactonojirimycin. Functionally, hydrolyzes the short-chain alpha-galactosaccharides raffinose and stachyose. The protein is Alpha-galactosidase AgaA of Geobacillus stearothermophilus (Bacillus stearothermophilus).